The following is a 318-amino-acid chain: Elongator complex protein 5 (318 aa).

Ser-270 is modified (phosphoserine).

It belongs to the ELP5 family. In terms of assembly, component of the elongator complex which consists of ELP1, ELP2, ELP3, ELP4, ELP5 and ELP6; in the complex, is required for optimal binding of ELP3 to ELP4. Tyrosine-phosphorylated.

The protein resides in the nucleus. It localises to the cytoplasm. The protein operates within tRNA modification; 5-methoxycarbonylmethyl-2-thiouridine-tRNA biosynthesis. In terms of biological role, component of the elongator complex which is required for multiple tRNA modifications, including mcm5U (5-methoxycarbonylmethyl uridine), mcm5s2U (5-methoxycarbonylmethyl-2-thiouridine), and ncm5U (5-carbamoylmethyl uridine). The elongator complex catalyzes the formation of carboxymethyluridine in the wobble base at position 34 in tRNAs. Involved in cell migration. This is Elongator complex protein 5 (Elp5) from Rattus norvegicus (Rat).